The chain runs to 703 residues: MEIEASRQQTTVPVSVGGGNFPVGGLSPLSEAIWREKAPTEFVGDVSARLTWQDLTVMVTMGDGETQNVLEGLTGYAEPGSLTALMGPSGSGKSTMLDALASRLAANAFLSGTVLLNGRKTKLSFGTAAYVTQDDNLIGTLTVRETIWYSARVRLPDKMLRSEKRALVERTIIEMGLQDCADTVIGNWHLRGISGGEKRRVSIALEILMRPRLLFLDEPTSGLDSASAFFVTQTLRALSRDGRTVIASIHQPSSEVFELFDRLYLLSGGKTVYFGQASDAYEFFAQAGFPCPALRNPSDHFLRCINSDFDKVRATLKGSMKLRFEASDDPLEKITTAEAIRLLVDYYHTSDYYYTAKAKVEEISQFKGTILDSGGSQASFLLQTYTLTKRSFINMSRDFGYYWLRLLIYILVTVCIGTIYLNVGTSYSAILARGSCASFVFGFVTFMSIGGFPSFVEDMKVFQRERLNGHYGVAAFVIANTLSATPFLIMITFISGTICYFMVGLHPGFTHYLFFVLCLYASVTVVESLMMAIASIVPNFLMGIIIGAGIQGIFMLVSGFFRLPNDIPKPFWRYPMSYISFHFWALQGQYQNDLRGLTFDSQGSAFKIPGEYVLENVFQIDLHRSKWINLSVILSMIIIYRIIFFIMIKTNEDVTPWVRGYIARRRMKQKNGTQNTTVAPDGLTQSPSLRNYIATRTDGARRW.

Residues 50 to 293 enclose the ABC transporter domain; sequence LTWQDLTVMV…FAQAGFPCPA (244 aa). 87–94 contacts ATP; that stretch reads GPSGSGKS. An ABC transmembrane type-2 domain is found at 382–594; it reads LQTYTLTKRS…ALQGQYQNDL (213 aa). The N-linked (GlcNAc...) asparagine glycan is linked to N394. Helical transmembrane passes span 406–426, 436–456, 485–505, 513–533, 540–560, and 628–648; these read LLIYILVTVCIGTIYLNVGTS, CASFVFGFVTFMSIGGFPSFV, TPFLIMITFISGTICYFMVGL, LFFVLCLYASVTVVESLMMAI, FLMGIIIGAGIQGIFMLVSGF, and INLSVILSMIIIYRIIFFIMI. Residues N671 and N675 are each glycosylated (N-linked (GlcNAc...) asparagine). Residue S688 is modified to Phosphoserine.

Belongs to the ABC transporter superfamily. ABCG family. Eye pigment precursor importer (TC 3.A.1.204) subfamily. Homodimer. Forms heterodimers with ABCG9, ABCG12 and ABCG14 in epidermal cells. As to expression, expressed in seedlings, roots, stems, leaves, flowers, and siliques, mostly in epidermis, trichomes, vasculatures and developing tissues. Follows an uniparental maternal expression in the seed, thus being the product of a maternally expressed imprinted gene. Accumulates in the phloem. Transcripts seem to be transported from shoots to roots.

It is found in the cell membrane. Its function is as follows. Required for the cuticle, root suberin and pollen coat development by controlling cutin and maybe wax transport to the extracellular matrix. Involved in developmental plasticity and stress responses. Together with ABCG9 and ABCG14, required for vascular development by regulating lipid/sterol homeostasis. May be a transporter of lignin precursors during tracheary element differentiation. The chain is ABC transporter G family member 11 from Arabidopsis thaliana (Mouse-ear cress).